Here is a 223-residue protein sequence, read N- to C-terminus: Cytidylate kinase (223 aa).

17 to 25 (GPTASGKGT) provides a ligand contact to ATP.

It belongs to the cytidylate kinase family. Type 1 subfamily.

It is found in the cytoplasm. It carries out the reaction CMP + ATP = CDP + ADP. The enzyme catalyses dCMP + ATP = dCDP + ADP. The sequence is that of Cytidylate kinase from Bordetella pertussis (strain Tohama I / ATCC BAA-589 / NCTC 13251).